Reading from the N-terminus, the 493-residue chain is Transmembrane protein 184 homolog DDB_G0284525 (493 aa).

Positions 1–10 (MTQESSSSNH) are enriched in polar residues. The segment at 1-25 (MTQESSSSNHYVDESSFDNNNNNNN) is disordered. A run of 7 helical transmembrane segments spans residues 46–66 (VPALYAMFALASLFVLLATIL), 87–107 (IVRIVFMIPIYAIYSLLSLLL), 119–139 (DCYEAYVLYMFFALCVSYGGG), 180–200 (YVLVRPAVTLASAIFEIFGLY), 212–232 (FYNAFIINVSVTVALYIVVLF), 254–274 (IVVFFCFWQSIAISGMTNFGW), and 293–313 (FLICFEMFGVAILHQYAFPYE). Residues Asn-415 and Asn-416 are each glycosylated (N-linked (GlcNAc...) asparagine).

It belongs to the TMEM184 family.

The protein localises to the cell membrane. Functionally, probable transporter. The protein is Transmembrane protein 184 homolog DDB_G0284525 (tmem184A) of Dictyostelium discoideum (Social amoeba).